Here is a 346-residue protein sequence, read N- to C-terminus: Biotin synthase (346 aa).

Residues 38-256 form the Radical SAM core domain; sequence KQIQVSTLLS…IAVARIMMPT (219 aa). Residues C53, C57, and C60 each contribute to the [4Fe-4S] cluster site. [2Fe-2S] cluster is bound by residues C97, C128, C188, and R260.

Belongs to the radical SAM superfamily. Biotin synthase family. In terms of assembly, homodimer. It depends on [4Fe-4S] cluster as a cofactor. [2Fe-2S] cluster serves as cofactor.

It carries out the reaction (4R,5S)-dethiobiotin + (sulfur carrier)-SH + 2 reduced [2Fe-2S]-[ferredoxin] + 2 S-adenosyl-L-methionine = (sulfur carrier)-H + biotin + 2 5'-deoxyadenosine + 2 L-methionine + 2 oxidized [2Fe-2S]-[ferredoxin]. The protein operates within cofactor biosynthesis; biotin biosynthesis; biotin from 7,8-diaminononanoate: step 2/2. Its function is as follows. Catalyzes the conversion of dethiobiotin (DTB) to biotin by the insertion of a sulfur atom into dethiobiotin via a radical-based mechanism. This chain is Biotin synthase, found in Salmonella arizonae (strain ATCC BAA-731 / CDC346-86 / RSK2980).